The primary structure comprises 415 residues: NADH-quinone oxidoreductase subunit D (415 aa).

The protein belongs to the complex I 49 kDa subunit family. As to quaternary structure, NDH-1 is composed of 14 different subunits. Subunits NuoB, C, D, E, F, and G constitute the peripheral sector of the complex.

Its subcellular location is the cell inner membrane. The enzyme catalyses a quinone + NADH + 5 H(+)(in) = a quinol + NAD(+) + 4 H(+)(out). In terms of biological role, NDH-1 shuttles electrons from NADH, via FMN and iron-sulfur (Fe-S) centers, to quinones in the respiratory chain. The immediate electron acceptor for the enzyme in this species is believed to be ubiquinone. Couples the redox reaction to proton translocation (for every two electrons transferred, four hydrogen ions are translocated across the cytoplasmic membrane), and thus conserves the redox energy in a proton gradient. The chain is NADH-quinone oxidoreductase subunit D from Myxococcus xanthus (strain DK1622).